The following is a 383-amino-acid chain: Protein COS5 (383 aa).

The Cytoplasmic portion of the chain corresponds to 1–42 (MKENELKNEKSVDVLSFKQLESQKIVLPQDLFRSSFTWFCYE). The helical transmembrane segment at 43 to 63 (IYKSLAFPIWMLLWLPLSVWW) threads the bilayer. Topologically, residues 64–72 (KLSNNCIYP) are extracellular. A helical membrane pass occupies residues 73–93 (LIVSLLVLFLGPIFVLVICGL). The Cytoplasmic portion of the chain corresponds to 94 to 232 (SRKRSLSKQL…RSKLTWFLKR (139 aa)). A helical membrane pass occupies residues 233–253 (IFTIYSLPLWLAFLNCICVSQ). Position 254 (His-254) is a topological domain, extracellular. The helical transmembrane segment at 255–275 (FCLAFRILCPGLFFLMMVWLF) threads the bilayer. The Cytoplasmic segment spans residues 276–383 (QNMRTTALLV…SRNEESLMKK (108 aa)).

This sequence belongs to the DUP/COS family.

The protein resides in the membrane. The chain is Protein COS5 (COS5) from Saccharomyces cerevisiae (strain ATCC 204508 / S288c) (Baker's yeast).